The chain runs to 325 residues: Methionine import ATP-binding protein MetN 3 (325 aa).

The ABC transporter domain occupies Ile2–Leu239. ATP is bound at residue Gly36–Ser43.

The protein belongs to the ABC transporter superfamily. Methionine importer (TC 3.A.1.24) family. The complex is composed of two ATP-binding proteins (MetN), two transmembrane proteins (MetI) and a solute-binding protein (MetQ).

It is found in the cell inner membrane. The enzyme catalyses L-methionine(out) + ATP + H2O = L-methionine(in) + ADP + phosphate + H(+). It carries out the reaction D-methionine(out) + ATP + H2O = D-methionine(in) + ADP + phosphate + H(+). Part of the ABC transporter complex MetNIQ involved in methionine import. Responsible for energy coupling to the transport system. This is Methionine import ATP-binding protein MetN 3 from Pseudomonas fluorescens (strain ATCC BAA-477 / NRRL B-23932 / Pf-5).